A 320-amino-acid chain; its full sequence is Stress-induced-phosphoprotein 1 (320 aa).

6 TPR repeats span residues 5 to 38, 40 to 72, 80 to 113, 140 to 173, 175 to 207, and 208 to 241; these read AIAEKDLGNAAYKQKDFEKAHVHYDKAIELDPSN, TFYNNKAAVYFEEKKFAECVQFCEKAVEVGRET, AKAMSRAGNAFQKQNDLSLAVQWFHRSLSEFRDP, AQEEKNKGNEYFKKGDYPTAMRHYNEAVKRDPEN, ILYSNRAACLTKLMEFQRALDDCDTCIRLDSKF, and IKGYIRKAACLVAMREWSKAQRAYEDALQVDPSN. A disordered region spans residues 241–269; it reads NEEAREGVRNCLRSNDEDPEKAKERSLAD. Residues 242 to 269 are compositionally biased toward basic and acidic residues; sequence EEAREGVRNCLRSNDEDPEKAKERSLAD. An STI1 domain is found at 269 to 308; it reads DPEVQEILRDPGMRMILEQMSNDPGAVREHLKNPEIFQKL.

As to quaternary structure, forms a complex with hsp-1/hsp70 and daf-21/hsp90. Interacts with daf-21/hsp90 (via the C-terminal MEEVD pentapeptide). In terms of tissue distribution, expressed ubiquitously in the whole body. Detected predominantly in the pharyngeal muscles, vulva epithelial cells, striated body-wall muscles, spermathecae and intestinal cell ring. Also observed in the tail regions of hermaphrodite and in the sensory rays and spicules of males.

Its subcellular location is the cytoplasm. In terms of biological role, plays a role in gonad development. Up-regulates longevity and thermotolerance. Binds daf-21/hsp90 and inhibits its ATPase activity. This Caenorhabditis elegans protein is Stress-induced-phosphoprotein 1.